The primary structure comprises 525 residues: Delta(24)-sterol reductase homolog dhcr-24 (525 aa).

Helical transmembrane passes span 27-47 and 214-234; these read WVFVVPFLLPLSFLFNTVFDF and SLFFAIPWSQGTICFLVAATI. Residues 47 to 239 form the FAD-binding PCMH-type domain; that stretch reads FRNRIVHAVN…VAATIKIIPC (193 aa).

The protein belongs to the FAD-binding oxidoreductase/transferase type 4 family. The cofactor is FAD.

The protein resides in the endoplasmic reticulum membrane. It is found in the golgi apparatus membrane. It carries out the reaction cholesterol + NADP(+) = desmosterol + NADPH + H(+). The enzyme catalyses lanosterol + NADPH + H(+) = 24,25-dihydrolanosterol + NADP(+). It catalyses the reaction 5alpha-cholest-8-en-3beta-ol + NADP(+) = zymosterol + NADPH + H(+). It functions in the pathway steroid biosynthesis; cholesterol biosynthesis. Catalyzes the reduction of the delta-24 double bond of sterol intermediates during cholesterol biosynthesis. This chain is Delta(24)-sterol reductase homolog dhcr-24, found in Caenorhabditis elegans.